Consider the following 110-residue polypeptide: Ribonuclease H2 subunit C (110 aa).

Residues 45 to 69 (LKREKSATPSSSDNTTSNTFSNGAI) form a disordered region. The span at 51–66 (ATPSSSDNTTSNTFSN) shows a compositional bias: low complexity.

It belongs to the RNase H2 subunit C family. Highly divergent. In terms of assembly, the RNase 2 complex is a heterotrimer composed of the catalytic subunit RNH201 and of the non-catalytic subunits RNH202 and RNH203.

The protein resides in the cytoplasm. The protein localises to the nucleus. In terms of biological role, non catalytic subunit of RNase H2, an endonuclease that specifically degrades the RNA of RNA:DNA hybrids. Participates in DNA replication, possibly by mediating the removal of lagging-strand Okazaki fragment RNA primers during DNA replication. Mediates the excision of single ribonucleotides from DNA:RNA duplexes. This chain is Ribonuclease H2 subunit C (RNH203), found in Saccharomyces cerevisiae (strain ATCC 204508 / S288c) (Baker's yeast).